The sequence spans 138 residues: ATP synthase subunit g, mitochondrial (138 aa).

Belongs to the ATPase g subunit family. F-type ATP synthases have 2 components, the catalytic core F(1) and the membrane-embedded component F(0), linked together by a central stalk and a peripheral stalk. The central stalk, also called rotor shaft, is often seen as part of F(1). The peripheral stalk is seen as part of F(0). F(0) contains the membrane channel next to the rotor. F-type ATP synthases form dimers but each monomer functions independently in ATP generation. The dimer consists of 17 different polypeptides: ATP1 (subunit alpha, 3 molecules per monomer, part of F(1)), ATP2 (subunit beta, 3 copies per monomer, part of F(1)), ATP3 (subunit gamma, part of the central stalk), ATP4 (subunit b, part of the peripheral stalk), ATP5/OSCP (subunit 5/OSCP, part of the peripheral stalk), ATP6 (subunit a, part of the peripheral stalk), ATP7 (subunit d, part of the peripheral stalk), ATP8 (subunit 8, part of the peripheral stalk), OLI1 (subunit c, part of the rotor, 10 molecules per monomer), ATP14 (subunit h, part of the peripheral stalk), ATP15 (subunit epsilon, part of the central stalk), ATP16 (subunit delta, part of the central stalk), ATP17 (subunit f, part of the peripheral stalk), ATP18 (subunit i/j, part of the peripheral stalk), ATP19 (subunit k, dimer-specific, at interface between monomers), ATP20 (subunit g, at interface between monomers), TIM11 (subunit e, at interface between monomers).

The protein resides in the mitochondrion inner membrane. Its function is as follows. Mitochondrial membrane ATP synthase (F(1)F(0) ATP synthase or Complex V) produces ATP from ADP in the presence of a proton gradient across the membrane which is generated by electron transport complexes of the respiratory chain. F-type ATP synthases consist of two structural domains, F(1) - containing the extramembraneous catalytic core, and F(0) - containing the membrane proton channel, linked together by a central stalk and a peripheral stalk. During catalysis, ATP synthesis in the catalytic domain of F(1) is coupled via a rotary mechanism of the central stalk subunits to proton translocation. Part of the complex F(0) domain. Minor subunit located with subunit a/ATP6 in the membrane. Together with subunit e/TIM11, probably contributes to membrane curvature at the site of the ATP synthase dimer, ultimately contributing to formation of cristae. In Yarrowia lipolytica (strain CLIB 122 / E 150) (Yeast), this protein is ATP synthase subunit g, mitochondrial.